We begin with the raw amino-acid sequence, 174 residues long: NADH-ubiquinone oxidoreductase chain 6 (174 aa).

Transmembrane regions (helical) follow at residues 1–21, 24–44, 47–67, 86–106, 111–131, and 151–171; these read MTYA…GFSS, SPIY…AIIL, GGGY…MVVF, VEVL…VLWV, GMVV…EGEG, and WLVV…IEIA.

The protein belongs to the complex I subunit 6 family. Core subunit of respiratory chain NADH dehydrogenase (Complex I) which is composed of 45 different subunits.

The protein localises to the mitochondrion inner membrane. It carries out the reaction a ubiquinone + NADH + 5 H(+)(in) = a ubiquinol + NAD(+) + 4 H(+)(out). Functionally, core subunit of the mitochondrial membrane respiratory chain NADH dehydrogenase (Complex I) which catalyzes electron transfer from NADH through the respiratory chain, using ubiquinone as an electron acceptor. Essential for the catalytic activity and assembly of complex I. The polypeptide is NADH-ubiquinone oxidoreductase chain 6 (MT-ND6) (Pan troglodytes (Chimpanzee)).